A 59-amino-acid polypeptide reads, in one-letter code: UPF0391 membrane protein lpp2589 (59 aa).

2 helical membrane-spanning segments follow: residues 5 to 25 and 30 to 50; these read ALIF…GIAV and IAKI…IMGL.

This sequence belongs to the UPF0391 family.

The protein resides in the cell membrane. This chain is UPF0391 membrane protein lpp2589, found in Legionella pneumophila (strain Paris).